Consider the following 247-residue polypeptide: Segregation and condensation protein A (247 aa).

The protein belongs to the ScpA family. In terms of assembly, component of a cohesin-like complex composed of ScpA, ScpB and the Smc homodimer, in which ScpA and ScpB bind to the head domain of Smc. The presence of the three proteins is required for the association of the complex with DNA.

It is found in the cytoplasm. Functionally, participates in chromosomal partition during cell division. May act via the formation of a condensin-like complex containing Smc and ScpB that pull DNA away from mid-cell into both cell halves. This is Segregation and condensation protein A from Bacillus cereus (strain ATCC 10987 / NRS 248).